Reading from the N-terminus, the 375-residue chain is 23S rRNA (uracil(747)-C(5))-methyltransferase RlmC (375 aa).

C3, C11, C14, and C87 together coordinate [4Fe-4S] cluster. S-adenosyl-L-methionine is bound by residues Q212, F241, E262, and N307. The active-site Nucleophile is the C334.

This sequence belongs to the class I-like SAM-binding methyltransferase superfamily. RNA M5U methyltransferase family. RlmC subfamily.

The enzyme catalyses uridine(747) in 23S rRNA + S-adenosyl-L-methionine = 5-methyluridine(747) in 23S rRNA + S-adenosyl-L-homocysteine + H(+). Catalyzes the formation of 5-methyl-uridine at position 747 (m5U747) in 23S rRNA. The chain is 23S rRNA (uracil(747)-C(5))-methyltransferase RlmC from Escherichia coli O17:K52:H18 (strain UMN026 / ExPEC).